Consider the following 115-residue polypeptide: UPF0127 protein PH1112 (115 aa).

It belongs to the UPF0127 family.

The polypeptide is UPF0127 protein PH1112 (Pyrococcus horikoshii (strain ATCC 700860 / DSM 12428 / JCM 9974 / NBRC 100139 / OT-3)).